A 29-amino-acid chain; its full sequence is Cyclotide mech-7 (29 aa).

Residues 1 to 29 constitute a cross-link (cyclopeptide (Gly-Asp)); sequence GIPICGETCTIGTCNTPGCTCSWPVCTRD. 3 cysteine pairs are disulfide-bonded: cysteine 5/cysteine 19, cysteine 9/cysteine 21, and cysteine 14/cysteine 26.

In terms of processing, this is a cyclic peptide. Contains 3 disulfide bonds.

Probably participates in a plant defense mechanism (Potential). Binds to and induces leakage in phospholipd membranes, particularly ones containing 1-palmitoyl-2-oleophosphatidylethanolamine (POPE). The chain is Cyclotide mech-7 from Melicytus chathamicus (Chatham Island mahoe).